The chain runs to 1073 residues: Probable lipase MIL1 (1073 aa).

2 disordered regions span residues Met1 to Ser151 and Leu163 to Asn190. Composition is skewed to basic and acidic residues over residues Gln54–Lys81 and Gly101–Asp121. The short motif at Trp143–Pro147 is the APM2-interacting WQEMP motif element. Residues Asn190, Asn229, and Asn236 are each glycosylated (N-linked (GlcNAc...) asparagine). The interval Ser230–Val267 is disordered. Low complexity predominate over residues Thr233 to Glu249. A compositionally biased stretch (acidic residues) spans Asn252–Val267. Asn280 is a glycosylation site (N-linked (GlcNAc...) asparagine). A helical transmembrane segment spans residues Phe292–Leu312. The segment at Asn385–Pro448 is disordered. Residues Arg404–Pro427 are compositionally biased toward polar residues. N-linked (GlcNAc...) asparagine glycosylation occurs at Asn411. Ser435 carries the phosphoserine modification. Residues Leu457–Ser477 form a helical membrane-spanning segment. Asn495 is a glycosylation site (N-linked (GlcNAc...) asparagine). 2 helical membrane passes run Leu553 to Gly573 and Ile577 to Val597. An N-linked (GlcNAc...) asparagine glycan is attached at Asn726. Residues Trp818–Ser838 traverse the membrane as a helical segment. N-linked (GlcNAc...) asparagine glycosylation occurs at Asn850. Disordered regions lie at residues Gly942–Ala968 and Lys1010–Ile1073. Pro residues predominate over residues Pro1027 to Ser1037. At Ser1037 the chain carries Phosphoserine.

Belongs to the TMCO4 family. Interacts with RPP0. Interacts with APM2.

Its subcellular location is the golgi apparatus membrane. The protein localises to the early endosome membrane. The protein resides in the cytoplasmic vesicle. It localises to the clathrin-coated vesicle membrane. Its function is as follows. Probable lipase that recruits the AP-1-related (AP-1R) complex to membranes via interaction with APM2. The AP-1R complex is an adapter protein complex that mediates of cargo protein SNC1 sorting in clathrin-coated vesicles. This Saccharomyces cerevisiae (strain ATCC 204508 / S288c) (Baker's yeast) protein is Probable lipase MIL1.